The chain runs to 86 residues: Putative defensin-like protein 234 (86 aa).

An N-terminal signal peptide occupies residues Met-1–Ala-26. Cystine bridges form between Cys-34–Cys-86, Cys-44–Cys-71, Cys-52–Cys-80, and Cys-69–Cys-82.

This sequence belongs to the DEFL family.

The protein localises to the secreted. This chain is Putative defensin-like protein 234 (SCRL14), found in Arabidopsis thaliana (Mouse-ear cress).